Consider the following 497-residue polypeptide: Transmembrane protein 200A (497 aa).

The Cytoplasmic portion of the chain corresponds to 1–61 (MIATGGVITG…RGKIRLYSAS (61 aa)). Over residues 20 to 30 (TRSQYHLSAQS) the composition is skewed to polar residues. A disordered region spans residues 20 to 44 (TRSQYHLSAQSPGPAPEKKTTKRKP). A helical transmembrane segment spans residues 62–82 (GFFLVLGVLILMAGIAMAVLG). At 83 to 127 (YWPHKDQPKAPETKMSANNTQSFGREQAGSIAQFLEQHMHSEKMK) the chain is on the extracellular side. The N-linked (GlcNAc...) asparagine glycan is linked to Asn-100. A helical membrane pass occupies residues 128-148 (MLGPFTMGIGIFIFICANAIL). The Cytoplasmic portion of the chain corresponds to 149-497 (HENRDRETKV…LKRGTSETRF (349 aa)). The span at 353 to 375 (SNSATESASSTSSRSSLSPGSTS) shows a compositional bias: low complexity. 2 disordered regions span residues 353–385 (SNSATESASSTSSRSSLSPGSTSGRFLSPGAAR) and 400–438 (HSKSLDLERGPTKLTVQPEQRKHPSWPRLDRSNSKGYTR). Basic and acidic residues predominate over residues 427–438 (RLDRSNSKGYTR).

Belongs to the TMEM200 family.

Its subcellular location is the membrane. The sequence is that of Transmembrane protein 200A (tmem200a) from Danio rerio (Zebrafish).